Reading from the N-terminus, the 225-residue chain is UPF0173 metal-dependent hydrolase PF1764 (225 aa).

It belongs to the UPF0173 family.

The polypeptide is UPF0173 metal-dependent hydrolase PF1764 (Pyrococcus furiosus (strain ATCC 43587 / DSM 3638 / JCM 8422 / Vc1)).